A 499-amino-acid polypeptide reads, in one-letter code: Aspartyl/glutamyl-tRNA(Asn/Gln) amidotransferase subunit B (499 aa).

This sequence belongs to the GatB/GatE family. GatB subfamily. As to quaternary structure, heterotrimer of A, B and C subunits.

The enzyme catalyses L-glutamyl-tRNA(Gln) + L-glutamine + ATP + H2O = L-glutaminyl-tRNA(Gln) + L-glutamate + ADP + phosphate + H(+). It carries out the reaction L-aspartyl-tRNA(Asn) + L-glutamine + ATP + H2O = L-asparaginyl-tRNA(Asn) + L-glutamate + ADP + phosphate + 2 H(+). Its function is as follows. Allows the formation of correctly charged Asn-tRNA(Asn) or Gln-tRNA(Gln) through the transamidation of misacylated Asp-tRNA(Asn) or Glu-tRNA(Gln) in organisms which lack either or both of asparaginyl-tRNA or glutaminyl-tRNA synthetases. The reaction takes place in the presence of glutamine and ATP through an activated phospho-Asp-tRNA(Asn) or phospho-Glu-tRNA(Gln). This Leifsonia xyli subsp. xyli (strain CTCB07) protein is Aspartyl/glutamyl-tRNA(Asn/Gln) amidotransferase subunit B.